A 288-amino-acid chain; its full sequence is 2-hydroxy-6-oxononadienedioate/2-hydroxy-6-oxononatrienedioate hydrolase (288 aa).

The AB hydrolase-1 domain occupies 38–274 (ALVLLHGSGP…RCGHWAQWEH (237 aa)). The active-site Proton acceptor is the His268.

The protein belongs to the AB hydrolase superfamily. MhpC family. Homodimer.

It catalyses the reaction (2Z,4E)-2-hydroxy-6-oxonona-2,4-dienedioate + H2O = (2Z)-2-hydroxypenta-2,4-dienoate + succinate + H(+). It carries out the reaction (2Z,4E,7E)-2-hydroxy-6-oxonona-2,4,7-trienedioate + H2O = (2Z)-2-hydroxypenta-2,4-dienoate + fumarate + H(+). It functions in the pathway aromatic compound metabolism; 3-phenylpropanoate degradation. Its function is as follows. Catalyzes the cleavage of the C5-C6 bond of 2-hydroxy-6-oxononadienedioate and 2-hydroxy-6-oxononatrienedioate, a dienol ring fission product of the bacterial meta-cleavage pathway for degradation of phenylpropionic acid. The chain is 2-hydroxy-6-oxononadienedioate/2-hydroxy-6-oxononatrienedioate hydrolase from Burkholderia vietnamiensis (strain G4 / LMG 22486) (Burkholderia cepacia (strain R1808)).